A 1279-amino-acid chain; its full sequence is ATP-dependent helicase/nuclease subunit A (1279 aa).

The UvrD-like helicase ATP-binding domain occupies 4-499 (TKWTDEQRQA…VKLFKNFRSR (496 aa)). Position 25-32 (25-32 (AGAGAGKT)) interacts with ATP. The UvrD-like helicase C-terminal domain maps to 526–853 (EEALKVGASY…RIMSIHKSKG (328 aa)).

It belongs to the helicase family. AddA subfamily. As to quaternary structure, heterodimer of AddA and AddB/RexB. Mg(2+) is required as a cofactor.

The catalysed reaction is Couples ATP hydrolysis with the unwinding of duplex DNA by translocating in the 3'-5' direction.. It carries out the reaction ATP + H2O = ADP + phosphate + H(+). Its function is as follows. The heterodimer acts as both an ATP-dependent DNA helicase and an ATP-dependent, dual-direction single-stranded exonuclease. Recognizes the chi site generating a DNA molecule suitable for the initiation of homologous recombination. The AddA nuclease domain is required for chi fragment generation; this subunit has the helicase and 3' -&gt; 5' nuclease activities. The chain is ATP-dependent helicase/nuclease subunit A from Clostridium botulinum (strain 657 / Type Ba4).